Consider the following 548-residue polypeptide: Glucose-6-phosphate isomerase (548 aa).

The active-site Proton donor is Glu355. Residues His386 and Lys514 contribute to the active site.

This sequence belongs to the GPI family.

It is found in the cytoplasm. It catalyses the reaction alpha-D-glucose 6-phosphate = beta-D-fructose 6-phosphate. Its pathway is carbohydrate biosynthesis; gluconeogenesis. It functions in the pathway carbohydrate degradation; glycolysis; D-glyceraldehyde 3-phosphate and glycerone phosphate from D-glucose: step 2/4. Functionally, catalyzes the reversible isomerization of glucose-6-phosphate to fructose-6-phosphate. The polypeptide is Glucose-6-phosphate isomerase (Photorhabdus laumondii subsp. laumondii (strain DSM 15139 / CIP 105565 / TT01) (Photorhabdus luminescens subsp. laumondii)).